We begin with the raw amino-acid sequence, 376 residues long: Chaperone protein DnaJ (376 aa).

A J domain is found at 5-69 (DYYEVLGISK…QKRAQYDQYG (65 aa)). Residues 133–215 (GKDAEIEIPR…CHGKGRVTKT (83 aa)) form a CR-type zinc finger. Residues Cys-146, Cys-149, Cys-163, Cys-166, Cys-189, Cys-192, Cys-203, and Cys-206 each coordinate Zn(2+). 4 CXXCXGXG motif repeats span residues 146–153 (CDTCHGSG), 163–170 (CSHCGGKG), 189–196 (CQYCNGTG), and 203–210 (CSTCHGKG).

It belongs to the DnaJ family. Homodimer. The cofactor is Zn(2+).

The protein resides in the cytoplasm. In terms of biological role, participates actively in the response to hyperosmotic and heat shock by preventing the aggregation of stress-denatured proteins and by disaggregating proteins, also in an autonomous, DnaK-independent fashion. Unfolded proteins bind initially to DnaJ; upon interaction with the DnaJ-bound protein, DnaK hydrolyzes its bound ATP, resulting in the formation of a stable complex. GrpE releases ADP from DnaK; ATP binding to DnaK triggers the release of the substrate protein, thus completing the reaction cycle. Several rounds of ATP-dependent interactions between DnaJ, DnaK and GrpE are required for fully efficient folding. Also involved, together with DnaK and GrpE, in the DNA replication of plasmids through activation of initiation proteins. In Listeria welshimeri serovar 6b (strain ATCC 35897 / DSM 20650 / CCUG 15529 / CIP 8149 / NCTC 11857 / SLCC 5334 / V8), this protein is Chaperone protein DnaJ.